Reading from the N-terminus, the 393-residue chain is Homogentisate phytyltransferase 1, chloroplastic (393 aa).

The N-terminal 36 residues, 1 to 36 (MESLLSSSSLVSAAGGFCWKKQNLKLHSLSEIRVLR), are a transit peptide targeting the chloroplast. The next 9 helical transmembrane spans lie at 108-128 (TVIG…EKVS), 133-153 (LLFT…IYIV), 170-190 (YLPL…VASF), 205-227 (PLFW…LPLL), 232-252 (FALV…QIAF), 271-291 (LIFA…FKDI), 314-334 (VFWT…LVGA), 338-358 (FIWS…TLWA), and 371-391 (ITSC…LLPF).

Belongs to the UbiA prenyltransferase family.

The protein resides in the plastid. It localises to the chloroplast membrane. It carries out the reaction phytyl diphosphate + homogentisate + H(+) = 2-methyl-6-phytyl-1,4-benzene-1,4-diol + CO2 + diphosphate. It functions in the pathway cofactor biosynthesis; tocopherol biosynthesis. Its function is as follows. Involved in the synthesis of tocopherol (vitamin E). Catalyzes the condensation of homogentisate and phytyl diphosphate to form dimethylphytylhydrquinone. Low activity with geranylgeranyl diphosphate as substrate, but no activity with farnesyl diphosphate or solanesyl diphosphate. Tocopherol functions to limit lipid oxidation during seed desiccation, quiescence and germination and early seedling development. Protects thylakoid membrane lipids from photooxidation and is required for low-temperature adaptation. The sequence is that of Homogentisate phytyltransferase 1, chloroplastic (HPT1) from Arabidopsis thaliana (Mouse-ear cress).